A 518-amino-acid polypeptide reads, in one-letter code: Zinc finger protein 449 (518 aa).

Residues 30–112 (RQRFRQFQYR…SLIEDLQREL (83 aa)) form the SCAN box domain. Over residues 292–304 (NPTLGETPENSNL) the composition is skewed to polar residues. Positions 292 to 325 (NPTLGETPENSNLEEPLNPKPHKKKSPGEKPHRC) are disordered. C2H2-type zinc fingers lie at residues 323–345 (HRCP…QRIH), 351–373 (HKCP…QRLH), 379–401 (YECT…QRTH), 407–429 (YKCL…LKTH), 435–457 (HRCH…QRTH), 463–485 (FKCN…LRIH), and 491–513 (YKCT…QVTH).

The protein belongs to the krueppel C2H2-type zinc-finger protein family.

It localises to the nucleus. In terms of biological role, may be involved in transcriptional regulation. The chain is Zinc finger protein 449 (ZNF449) from Homo sapiens (Human).